The primary structure comprises 2471 residues: Neurogenic locus notch homolog protein 2 (2471 aa).

An N-terminal signal peptide occupies residues 1-25; the sequence is MPALRPALLWALLALWLCCAAPAHA. 4 EGF-like domains span residues 26 to 63, 64 to 102, 105 to 143, and 144 to 180; these read LQCRDGYEPCVNEGMCVTYHNGTGYCKCPEGFLGEYCQ, HRDPCEKNRCQNGGTCVAQAMLGKATCRCASGFTGEDCQ, TSHPCFVSRPCLNGGTCHMLSRDTYECTCQVGFTGKECQ, and WTDACLSHPCANGSTCTTVANQFSCKCLTGFTGQKCE. The Extracellular segment spans residues 26–1677; that stretch reads LQCRDGYEPC…SESLTPERTQ (1652 aa). Cystine bridges form between Cys-28/Cys-41, Cys-35/Cys-51, Cys-53/Cys-62, Cys-68/Cys-79, Cys-73/Cys-90, Cys-92/Cys-101, Cys-109/Cys-121, Cys-115/Cys-131, Cys-133/Cys-142, Cys-148/Cys-159, Cys-153/Cys-168, Cys-170/Cys-179, Cys-186/Cys-198, Cys-192/Cys-207, Cys-209/Cys-218, Cys-225/Cys-236, Cys-230/Cys-246, Cys-248/Cys-257, Cys-264/Cys-275, Cys-269/Cys-284, Cys-286/Cys-295, Cys-302/Cys-315, Cys-309/Cys-324, Cys-326/Cys-335, Cys-342/Cys-353, Cys-347/Cys-362, Cys-364/Cys-373, Cys-379/Cys-390, Cys-384/Cys-401, Cys-403/Cys-412, Cys-419/Cys-433, Cys-427/Cys-442, Cys-444/Cys-453, Cys-460/Cys-471, Cys-465/Cys-480, Cys-482/Cys-491, Cys-498/Cys-509, Cys-503/Cys-518, Cys-520/Cys-529, Cys-536/Cys-547, Cys-541/Cys-556, Cys-558/Cys-567, Cys-574/Cys-584, Cys-579/Cys-593, Cys-595/Cys-604, Cys-611/Cys-622, Cys-616/Cys-631, Cys-633/Cys-642, Cys-649/Cys-659, Cys-654/Cys-668, Cys-670/Cys-679, Cys-686/Cys-697, Cys-691/Cys-706, Cys-708/Cys-717, Cys-724/Cys-734, Cys-729/Cys-743, Cys-745/Cys-754, Cys-761/Cys-772, Cys-766/Cys-781, Cys-783/Cys-792, Cys-799/Cys-810, Cys-804/Cys-819, Cys-821/Cys-830, Cys-837/Cys-848, Cys-842/Cys-859, Cys-861/Cys-870, Cys-877/Cys-888, Cys-882/Cys-897, Cys-899/Cys-908, Cys-915/Cys-926, Cys-920/Cys-935, Cys-937/Cys-946, Cys-953/Cys-964, Cys-958/Cys-973, Cys-975/Cys-984, Cys-991/Cys-1002, Cys-996/Cys-1011, Cys-1013/Cys-1022, Cys-1029/Cys-1040, Cys-1034/Cys-1049, Cys-1051/Cys-1060, Cys-1067/Cys-1078, Cys-1072/Cys-1087, and Cys-1089/Cys-1098. Asn-46 is a glycosylation site (N-linked (GlcNAc...) asparagine). Residue Asn-155 is glycosylated (N-linked (GlcNAc...) asparagine). The EGF-like 5; calcium-binding domain maps to 182-219; it reads DVNECDIPGHCQHGGTCLNLPGSYQCQCPQGFTGQYCD. Residues 221–258 enclose the EGF-like 6 domain; the sequence is LYVPCAPSPCVNGGTCRQTGDFTFECNCLPGFEGSTCE. One can recognise an EGF-like 7; calcium-binding domain in the interval 260–296; sequence NIDDCPNHRCQNGGVCVDGVNTYNCRCPPQWTGQFCT. One can recognise an EGF-like 8; calcium-binding domain in the interval 298-336; it reads DVDECLLQPNACQNGGTCANRNGGYGCVCVNGWSGDDCS. An EGF-like 9; calcium-binding domain is found at 338-374; sequence NIDDCAFASCTPGSTCIDRVASFSCMCPEGKAGLLCH. The 39-residue stretch at 375 to 413 folds into the EGF-like 10 domain; that stretch reads LDDACISNPCHKGALCDTNPLNGQYICTCPQGYKGADCT. An EGF-like 11; calcium-binding domain is found at 415–454; the sequence is DVDECAMANSNPCEHAGKCVNTDGAFHCECLKGYAGPRCE. Positions 456–492 constitute an EGF-like 12; calcium-binding domain; sequence DINECHSDPCQNDATCLDKIGGFTCLCMPGFKGVHCE. The EGF-like 13; calcium-binding domain occupies 494 to 530; that stretch reads EINECQSNPCVNNGQCVDKVNRFQCLCPPGFTGPVCQ. The 37-residue stretch at 532-568 folds into the EGF-like 14; calcium-binding domain; that stretch reads DIDDCSSTPCLNGAKCIDHPNGYECQCATGFTGVLCE. Residues 570 to 605 enclose the EGF-like 15; calcium-binding domain; the sequence is NIDNCDPDPCHHGQCQDGIDSYTCICNPGYMGAICS. The 37-residue stretch at 607–643 folds into the EGF-like 16; calcium-binding domain; sequence QIDECYSSPCLNDGRCIDLVNGYQCNCQPGTSGVNCE. O-linked (Glc...) serine; alternate glycosylation occurs at Ser-613. Ser-613 carries an O-linked (Xyl...) serine; alternate glycan. An EGF-like 17; calcium-binding domain is found at 645–680; it reads NFDDCASNPCIHGICMDGINRYSCVCSPGFTGQRCN. An EGF-like 18; calcium-binding domain is found at 682 to 718; sequence DIDECASNPCRKGATCINGVNGFRCICPEGPHHPSCY. The EGF-like 19 domain maps to 720-755; the sequence is QVNECLSNPCIHGNCTGGLSGYKCLCDAGWVGINCE. The N-linked (GlcNAc...) asparagine glycan is linked to Asn-733. In terms of domain architecture, EGF-like 20; calcium-binding spans 757–793; the sequence is DKNECLSNPCQNGGTCDNLVNGYRCTCKKGFKGYNCQ. In terms of domain architecture, EGF-like 21; calcium-binding spans 795 to 831; sequence NIDECASNPCLNQGTCFDDISGYTCHCVLPYTGKNCQ. Residues 833-871 enclose the EGF-like 22 domain; sequence VLAPCSPNPCENAAVCKESPNFESYTCLCAPGWQGQRCT. Residues 873–909 enclose the EGF-like 23; calcium-binding domain; that stretch reads DIDECISKPCMNHGLCHNTQGSYMCECPPGFSGMDCE. Residues 911 to 947 form the EGF-like 24; calcium-binding domain; the sequence is DIDDCLANPCQNGGSCMDGVNTFSCLCLPGFTGDKCQ. The region spanning 949–985 is the EGF-like 25; calcium-binding domain; that stretch reads DMNECLSEPCKNGGTCSDYVNSYTCKCQAGFDGVHCE. Positions 987–1023 constitute an EGF-like 26; calcium-binding domain; the sequence is NINECTESSCFNGGTCVDGINSFSCLCPVGFTGSFCL. The 37-residue stretch at 1025-1061 folds into the EGF-like 27; calcium-binding domain; the sequence is EINECSSHPCLNEGTCVDGLGTYRCSCPLGYTGKNCQ. 2 EGF-like domains span residues 1063 to 1099 and 1101 to 1147; these read LVNLCSRSPCKNKGTCVQKKAESQCLCPSGWAGAYCD and PNVS…SYCE. Asn-1102 carries an N-linked (GlcNAc...) asparagine glycan. Disulfide bonds link Cys-1105–Cys-1126, Cys-1120–Cys-1135, Cys-1137–Cys-1146, Cys-1153–Cys-1164, Cys-1158–Cys-1173, Cys-1175–Cys-1184, Cys-1191–Cys-1202, Cys-1196–Cys-1211, Cys-1213–Cys-1222, Cys-1229–Cys-1241, Cys-1235–Cys-1250, Cys-1252–Cys-1261, Cys-1268–Cys-1281, Cys-1273–Cys-1290, Cys-1292–Cys-1301, Cys-1308–Cys-1319, Cys-1313–Cys-1331, Cys-1333–Cys-1342, Cys-1378–Cys-1389, Cys-1383–Cys-1400, Cys-1402–Cys-1411, Cys-1425–Cys-1448, Cys-1430–Cys-1443, and Cys-1439–Cys-1455. Positions 1149 to 1185 constitute an EGF-like 30; calcium-binding domain; that stretch reads QLDECASNPCQHGATCSDFIGGYRCECVPGYQGVNCE. The 37-residue stretch at 1187–1223 folds into the EGF-like 31; calcium-binding domain; that stretch reads EVDECQNQPCQNGGTCIDLVNHFKCSCPPGTRGLLCE. In terms of domain architecture, EGF-like 32; calcium-binding spans 1225–1262; sequence NIDDCARGPHCLNGGQCMDRIGGYSCRCLPGFAGERCE. EGF-like domains lie at 1264–1302, 1304–1343, and 1374–1412; these read DINECLSNPCSSEGSLDCIQLTNDYLCVCRSAFTGRHCE, FVDVCPQMPCLNGGTCAVASNMPDGFICRCPPGFSGARCQ, and CESGCASSPCQHGGSCHPQRQPPYYSCQCAPPFSGSRCE. LNR repeat units follow at residues 1425–1465, 1466–1502, and 1503–1544; these read CLSQ…PWAN, CSSPLPCWDYINNQCDELCNTVECLFDNFECQGNSKT, and CKYD…NLAE. The interval 1425–1677 is negative regulatory region (NRR); sequence CLSQYCADKA…SESLTPERTQ (253 aa). Asn-1465 carries N-linked (GlcNAc...) asparagine glycosylation. Disulfide bonds link Cys-1466-Cys-1489, Cys-1472-Cys-1484, Cys-1480-Cys-1496, Cys-1503-Cys-1527, Cys-1509-Cys-1522, Cys-1518-Cys-1534, and Cys-1632-Cys-1639. The chain crosses the membrane as a helical span at residues 1678–1698; that stretch reads LLYLLAVAVVIILFIILLGVI. The Cytoplasmic portion of the chain corresponds to 1699–2471; sequence MAKRKRKHGS…PPHNNMQVYA (773 aa). Thr-1716 carries the phosphothreonine modification. A disordered region spans residues 1754 to 1788; it reads TSEHWVDDEGPQPKKVKAEDEALLSEEDDPIDRRP. A compositionally biased stretch (acidic residues) spans 1774 to 1783; the sequence is EALLSEEDDP. Ser-1778 is modified (phosphoserine). A Phosphothreonine modification is found at Thr-1802. The residue at position 1804 (Ser-1804) is a Phosphoserine. Thr-1808 is modified (phosphothreonine). ANK repeat units follow at residues 1827 to 1871, 1876 to 1905, 1909 to 1939, 1943 to 1972, 1976 to 2005, and 2009 to 2038; these read DGCT…SLQA, TGEMALHLAARYSRADAAKRLLDAGADANA, MGRCPLHAAVAADAQGVFQILIRNRVTDLDA, DGTTPLILAARLAVEGMVAELINCQADVNA, HGKSALHWAAAVNNVEATLLLLKNGANRDM, and KEETPLFLAAREGSYEAAKILLDHFANRDI. Ser-1842 and Ser-1845 each carry phosphoserine. Phosphoserine is present on residues Ser-2070, Ser-2078, and Ser-2081. Disordered regions lie at residues 2091–2168 and 2380–2471; these read FLSL…TSSP and VGKY…QVYA. Position 2097 is a phosphothreonine (Thr-2097). Over residues 2098–2107 the composition is skewed to basic residues; that stretch reads PMGKKSRRPS. Composition is skewed to polar residues over residues 2108–2117, 2137–2150, 2159–2168, and 2388–2406; these read AKSTMPTSLP, EKVQLSESSVTLSP, TYVSDTTSSP, and SQHSYASSNAAERTPSHSG. Residues 2417–2445 show a composition bias toward low complexity; that stretch reads PSPESPDQWSSSSPHSASDWSDVTTSPTP.

Belongs to the NOTCH family. As to quaternary structure, heterodimer of a C-terminal fragment N(TM) and an N-terminal fragment N(EC) which are probably linked by disulfide bonds. Interacts with MAML1, MAML2 and MAML3 which act as transcriptional coactivators for NOTCH2. Interacts with RELA/p65. Interacts with HIF1AN. Interacts (via ANK repeats) with TCIM, the interaction inhibits the nuclear translocation of NOTCH2 N2ICD. Interacts with CUL1, RBX1, SKP1 and FBXW7 that are SCF(FBXW7) E3 ubiquitin-protein ligase complex components. Interacts with MINAR1; this interaction increases MINAR1 stability and function. Interacts with NOTCH2NL (NOTCH2NLA, NOTCH2NLB and/or NOTCH2NLC); leading to enhance Notch signaling pathway in a non-cell-autonomous manner. Interacts with MDK; this interaction mediates a nuclear accumulation of NOTCH2 and therefore activation of NOTCH2 signaling leading to interaction between HES1 and STAT3. Interacts with MINAR2. Synthesized in the endoplasmic reticulum as an inactive form which is proteolytically cleaved by a furin-like convertase in the trans-Golgi network before it reaches the plasma membrane to yield an active, ligand-accessible form. Cleavage results in a C-terminal fragment N(TM) and a N-terminal fragment N(EC). Following ligand binding, it is cleaved by TNF-alpha converting enzyme (TACE) to yield a membrane-associated intermediate fragment called notch extracellular truncation (NEXT). This fragment is then cleaved by presenilin dependent gamma-secretase to release a notch-derived peptide containing the intracellular domain (NICD) from the membrane. Post-translationally, hydroxylated by HIF1AN. In terms of processing, can be either O-glucosylated or O-xylosylated at Ser-613 by POGLUT1. Phosphorylated by GSK3. GSK3-mediated phosphorylation is necessary for NOTCH2 recognition by FBXW7, ubiquitination and degradation via the ubiquitin proteasome pathway. Expressed in the brain, heart, kidney, lung, skeletal muscle and liver. Ubiquitously expressed in the embryo.

It localises to the cell membrane. Its subcellular location is the nucleus. The protein localises to the cytoplasm. Its function is as follows. Functions as a receptor for membrane-bound ligands Jagged-1 (JAG1), Jagged-2 (JAG2) and Delta-1 (DLL1) to regulate cell-fate determination. Upon ligand activation through the released notch intracellular domain (NICD) it forms a transcriptional activator complex with RBPJ/RBPSUH and activates genes of the enhancer of split locus. Affects the implementation of differentiation, proliferation and apoptotic programs. Involved in bone remodeling and homeostasis. In collaboration with RELA/p65 enhances NFATc1 promoter activity and positively regulates RANKL-induced osteoclast differentiation. Positively regulates self-renewal of liver cancer cells. This is Neurogenic locus notch homolog protein 2 from Homo sapiens (Human).